The sequence spans 275 residues: 2,3,4,5-tetrahydropyridine-2,6-dicarboxylate N-succinyltransferase (275 aa).

It belongs to the transferase hexapeptide repeat family.

It is found in the cytoplasm. It carries out the reaction (S)-2,3,4,5-tetrahydrodipicolinate + succinyl-CoA + H2O = (S)-2-succinylamino-6-oxoheptanedioate + CoA. The protein operates within amino-acid biosynthesis; L-lysine biosynthesis via DAP pathway; LL-2,6-diaminopimelate from (S)-tetrahydrodipicolinate (succinylase route): step 1/3. The chain is 2,3,4,5-tetrahydropyridine-2,6-dicarboxylate N-succinyltransferase from Burkholderia multivorans (strain ATCC 17616 / 249).